Reading from the N-terminus, the 458-residue chain is Pentatricopeptide repeat-containing protein At1g77405 (458 aa).

PPR repeat units follow at residues T164–P198, D199–Y233, D236–F271, D282–P316, N317–V351, G353–P387, and R388–G419.

It belongs to the PPR family. P subfamily.

The sequence is that of Pentatricopeptide repeat-containing protein At1g77405 from Arabidopsis thaliana (Mouse-ear cress).